The primary structure comprises 436 residues: GTPase Der (436 aa).

EngA-type G domains follow at residues 4–167 and 175–351; these read PTVA…PTEA and IKFS…QSQN. Residues 10–17, 57–61, 119–122, 181–188, 229–233, and 294–297 each bind GTP; these read GRPNVGKS, DTGGI, NKVD, DTAGM, and NKWD. A KH-like domain is found at 352–436; sequence TRIPSAVLND…PIRLIARKRK (85 aa).

The protein belongs to the TRAFAC class TrmE-Era-EngA-EngB-Septin-like GTPase superfamily. EngA (Der) GTPase family. Associates with the 50S ribosomal subunit.

Functionally, GTPase that plays an essential role in the late steps of ribosome biogenesis. The sequence is that of GTPase Der from Streptococcus mutans serotype c (strain ATCC 700610 / UA159).